A 286-amino-acid chain; its full sequence is Gap junction alpha-6 protein (286 aa).

Topologically, residues 1–23 (MSDWSALHQLLEKVQPYSTAGGK) are cytoplasmic. The helical transmembrane segment at 24–41 (VWIKVLFIFRILLLGTAI) threads the bilayer. At 42–76 (ESAWSDEQFEFHCNTQQPGCENVCYDQAFPISHVR) the chain is on the extracellular side. The helical transmembrane segment at 77–99 (LWVLQVIFVSVPTLLHLAHVYYV) threads the bilayer. At 100–151 (IRQNEKLKKQEEEELKVAHFNGASGERRLQKHTGKHIKCGSKEHGNRKMRGR) the chain is on the cytoplasmic side. The chain crosses the membrane as a helical span at residues 152 to 174 (LLLTYMASIFFKSVFEVAFLLIQ). Residues 175-209 (WYLYGFTLSAVYICEQSPCPHRVDCFLSRPTEKTI) are Extracellular-facing. A helical transmembrane segment spans residues 210 to 232 (FILFMLVVSMVSFVLNVIELFYV). At 233–286 (LFKAIKNHLGNEKEEVYCNPVELQKPSCVSSSAVLTTICSSDQVVPVGLSSFYM) the chain is on the cytoplasmic side.

The protein belongs to the connexin family. Alpha-type (group II) subfamily. A connexon is composed of a hexamer of connexins. In terms of tissue distribution, expressed in testis.

Its subcellular location is the cell membrane. The protein resides in the cell junction. It localises to the gap junction. Its function is as follows. One gap junction consists of a cluster of closely packed pairs of transmembrane channels, the connexons, through which materials of low MW diffuse from one cell to a neighboring cell. The chain is Gap junction alpha-6 protein (Gja6) from Rattus norvegicus (Rat).